A 65-amino-acid polypeptide reads, in one-letter code: Seminal plasma acrosin inhibitor A1 (65 aa).

The region spanning 1 to 59 (TRKQPNCNVYRSHLFFCTRQMDPICGTNGKSYANPCIFCSEKGLRNQKFDFGHWGHCRE) is the Kazal-like domain. Cystine bridges form between Cys-7–Cys-39, Cys-17–Cys-36, and Cys-25–Cys-57. Ser-12 carries an O-linked (GalNAc...) serine glycan. O-linked (GalNAc...) serine glycosylation occurs at Ser-62.

In terms of processing, the identity of the O-linked saccharides are not reported in Ref.1. The O-linked polysaccharides on Ser-12 and Ser-62 are probably the mucin type linked to GalNAc. Seminal plasma.

It is found in the secreted. Inhibits acrosin. This Sus scrofa (Pig) protein is Seminal plasma acrosin inhibitor A1.